Reading from the N-terminus, the 692-residue chain is Elongation factor G 1 (692 aa).

Positions 8–283 constitute a tr-type G domain; that stretch reads EKTRNIGIMA…SVVEYLPSPV (276 aa). GTP is bound by residues 17–24, 81–85, and 135–138; these read AHIDAGKT, DTPGH, and NKMD.

Belongs to the TRAFAC class translation factor GTPase superfamily. Classic translation factor GTPase family. EF-G/EF-2 subfamily.

The protein localises to the cytoplasm. Functionally, catalyzes the GTP-dependent ribosomal translocation step during translation elongation. During this step, the ribosome changes from the pre-translocational (PRE) to the post-translocational (POST) state as the newly formed A-site-bound peptidyl-tRNA and P-site-bound deacylated tRNA move to the P and E sites, respectively. Catalyzes the coordinated movement of the two tRNA molecules, the mRNA and conformational changes in the ribosome. This chain is Elongation factor G 1, found in Geobacter metallireducens (strain ATCC 53774 / DSM 7210 / GS-15).